The chain runs to 447 residues: Tubulin beta-4 chain (447 aa).

GTP-binding residues include Q11, E71, S140, G144, T145, G146, N206, and N228. E71 serves as a coordination point for Mg(2+). A disordered region spans residues 428–447; it reads QDATAEEYEEEEHDGEEEHA. Residues 431-447 are compositionally biased toward acidic residues; the sequence is TAEEYEEEEHDGEEEHA.

Belongs to the tubulin family. As to quaternary structure, dimer of alpha and beta chains. A typical microtubule is a hollow water-filled tube with an outer diameter of 25 nm and an inner diameter of 15 nM. Alpha-beta heterodimers associate head-to-tail to form protofilaments running lengthwise along the microtubule wall with the beta-tubulin subunit facing the microtubule plus end conferring a structural polarity. Microtubules usually have 13 protofilaments but different protofilament numbers can be found in some organisms and specialized cells. Requires Mg(2+) as cofactor.

Its subcellular location is the cytoplasm. It localises to the cytoskeleton. In terms of biological role, tubulin is the major constituent of microtubules, a cylinder consisting of laterally associated linear protofilaments composed of alpha- and beta-tubulin heterodimers. Microtubules grow by the addition of GTP-tubulin dimers to the microtubule end, where a stabilizing cap forms. Below the cap, tubulin dimers are in GDP-bound state, owing to GTPase activity of alpha-tubulin. This chain is Tubulin beta-4 chain (TUBB4), found in Zea mays (Maize).